The sequence spans 401 residues: Phosphoglycerate kinase (401 aa).

Substrate is bound by residues 20-22 (DFN), Arg35, 58-61 (HLGR), Arg117, and Arg154. ATP is bound by residues Lys204, Gly298, Glu329, and 358–361 (GGDS).

The protein belongs to the phosphoglycerate kinase family. Monomer.

The protein resides in the cytoplasm. The catalysed reaction is (2R)-3-phosphoglycerate + ATP = (2R)-3-phospho-glyceroyl phosphate + ADP. The protein operates within carbohydrate degradation; glycolysis; pyruvate from D-glyceraldehyde 3-phosphate: step 2/5. The sequence is that of Phosphoglycerate kinase from Bifidobacterium longum subsp. infantis (strain ATCC 15697 / DSM 20088 / JCM 1222 / NCTC 11817 / S12).